A 382-amino-acid polypeptide reads, in one-letter code: tRNA(Met) cytidine acetate ligase (382 aa).

ATP contacts are provided by residues 7 to 20 (ITEY…HVYH), Gly-100, Asn-153, and Arg-178.

This sequence belongs to the TmcAL family.

The protein resides in the cytoplasm. It carries out the reaction cytidine(34) in elongator tRNA(Met) + acetate + ATP = N(4)-acetylcytidine(34) in elongator tRNA(Met) + AMP + diphosphate. In terms of biological role, catalyzes the formation of N(4)-acetylcytidine (ac(4)C) at the wobble position of elongator tRNA(Met), using acetate and ATP as substrates. First activates an acetate ion to form acetyladenylate (Ac-AMP) and then transfers the acetyl group to tRNA to form ac(4)C34. The polypeptide is tRNA(Met) cytidine acetate ligase (Staphylococcus carnosus (strain TM300)).